Here is a 363-residue protein sequence, read N- to C-terminus: tRNA(Met) cytidine acetate ligase (363 aa).

Residues 7-20, Gly-96, Asn-152, and Arg-175 contribute to the ATP site; that span reads IAEF…HKYL.

It belongs to the TmcAL family.

The protein localises to the cytoplasm. It catalyses the reaction cytidine(34) in elongator tRNA(Met) + acetate + ATP = N(4)-acetylcytidine(34) in elongator tRNA(Met) + AMP + diphosphate. In terms of biological role, catalyzes the formation of N(4)-acetylcytidine (ac(4)C) at the wobble position of elongator tRNA(Met), using acetate and ATP as substrates. First activates an acetate ion to form acetyladenylate (Ac-AMP) and then transfers the acetyl group to tRNA to form ac(4)C34. The chain is tRNA(Met) cytidine acetate ligase from Streptococcus thermophilus (strain ATCC BAA-491 / LMD-9).